Here is a 600-residue protein sequence, read N- to C-terminus: Probable methyltransferase PMT21 (600 aa).

At 1–16 the chain is on the cytoplasmic side; it reads MKYKDEKYEKAEKGSR. The helical; Signal-anchor for type II membrane protein transmembrane segment at 17–37 threads the bilayer; that stretch reads ILPKTVLLILLCGLSFYLGGL. Residues 38 to 600 lie on the Lumenal side of the membrane; it reads YCGKNIIEVS…YSSNASSETN (563 aa). N-linked (GlcNAc...) asparagine glycosylation occurs at N594.

Belongs to the methyltransferase superfamily.

It is found in the endoplasmic reticulum membrane. The sequence is that of Probable methyltransferase PMT21 (ERD3) from Arabidopsis thaliana (Mouse-ear cress).